The sequence spans 494 residues: Calmodulin-binding protein 60 A (494 aa).

Residues 1–62 (MRIPTYDFGS…AGIKWICEKE (62 aa)) form a calmodulin-binding region. Positions 132–252 (VSDWTDEDIR…AFHRRLNLSN (121 aa)) are DNA-binding.

Belongs to the plant ACBP60 protein family. Interacts with calmodulin (CaM). As to expression, expressed in stems, flowers and root.

The protein resides in the nucleus. Its function is as follows. Transcription activator that binds DNA in a sequence-specific manner, likely 5'-GAAATTTTGG-3', to promote the expression of target genes. The protein is Calmodulin-binding protein 60 A of Arabidopsis thaliana (Mouse-ear cress).